The primary structure comprises 398 residues: MNYNKKSIEYIDVKGKKVLVRCDFNVPLNEGKITDENRLVGALPTIKYLMEKGAKIILCSHMGKPKGEPKKELSLLPVAKRLSEMLNKEVIFADDDNVVGENAKKAVEDMKDGDVVLLQNTRYRKEETKNEEVFSKELASLADVFVNDAFGTAHRAHCSTVGVTNYLKEAACGYLIQKELKFLGNAVEKPERPFVAILGGAKVSDKINVINNLLDKVDTLIIGGGMGYTFLKAQGYTIGNSLVEEDKVEYSKEMIDKAKEKGVNLLLPIDNVVADKFDKDASPVVTEDQNIGEGYMGLDIGPKTAKIYSDAIKSAKTVVWNGPMGVFEFKSFANGTIEVAKAMADSDAVTIIGGGDSAAAVNILGFGDKMTHISTGGGASLEFLEGKELPGIAALNDK.

Substrate-binding positions include 23–25 (DFN), R38, 61–64 (HMGK), R122, and R155. Residues K206, G297, E328, and 354–357 (GGDS) each bind ATP.

This sequence belongs to the phosphoglycerate kinase family. In terms of assembly, monomer.

Its subcellular location is the cytoplasm. The catalysed reaction is (2R)-3-phosphoglycerate + ATP = (2R)-3-phospho-glyceroyl phosphate + ADP. Its pathway is carbohydrate degradation; glycolysis; pyruvate from D-glyceraldehyde 3-phosphate: step 2/5. The chain is Phosphoglycerate kinase from Clostridium botulinum (strain Kyoto / Type A2).